The following is a 92-amino-acid chain: Small ribosomal subunit protein uS19 (92 aa).

It belongs to the universal ribosomal protein uS19 family.

Functionally, protein S19 forms a complex with S13 that binds strongly to the 16S ribosomal RNA. This Leuconostoc mesenteroides subsp. mesenteroides (strain ATCC 8293 / DSM 20343 / BCRC 11652 / CCM 1803 / JCM 6124 / NCDO 523 / NBRC 100496 / NCIMB 8023 / NCTC 12954 / NRRL B-1118 / 37Y) protein is Small ribosomal subunit protein uS19.